The primary structure comprises 255 residues: Small ribosomal subunit protein uS10m (255 aa).

The N-terminal 32 residues, 1–32 (MALPAARSALSARAFIRPAAALNAAASSSRYL), are a transit peptide targeting the mitochondrion. 2 disordered regions span residues 30-52 (RYLSTTTPRHDAPVATTPGNSET) and 220-255 (SEGEGEDQAEGVQKIVDAAREEKPAEKLKEEEAKSS). Positions 236–255 (DAAREEKPAEKLKEEEAKSS) are enriched in basic and acidic residues.

This sequence belongs to the universal ribosomal protein uS10 family. Part of the mitochondrial small ribosomal subunit.

Its subcellular location is the mitochondrion. Functionally, involved in mitochondrial genome encoded proteins translation. Involved in the binding of tRNA to the ribosomes. The sequence is that of Small ribosomal subunit protein uS10m (RSM10) from Cryptococcus neoformans var. neoformans serotype D (strain B-3501A) (Filobasidiella neoformans).